The sequence spans 518 residues: Probable high-affinity hexose transporter ght7 (518 aa).

Residues 1–27 (MRDFQSRFADRYNQITNSYSYSSSRQG) lie on the Cytoplasmic side of the membrane. The chain crosses the membrane as a helical span at residues 28 to 48 (LITGMVNVGSFFGCLLSSPVA). At 49-54 (DKIGKR) the chain is on the extracellular side. A helical membrane pass occupies residues 55–75 (LSIIVWTTVYLIGIIIQVTTV). The Cytoplasmic portion of the chain corresponds to 76–77 (PS). A helical transmembrane segment spans residues 78–98 (WVQILVAKIWTGLSIGALSVI). The Extracellular portion of the chain corresponds to 99–112 (TPGYQSEVAPAIMR). The helical transmembrane segment at 113 to 133 (GAIVTTYQLFITLGIFIAACI) threads the bilayer. Over 134–149 (NMGTHKYSHGTTAQWR) the chain is Cytoplasmic. A helical transmembrane segment spans residues 150-170 (ISIGINLLWGIITLVGIIFLP). Residues 171–236 (ESPRYLIAIG…IFNANIRYRT (66 aa)) are Extracellular-facing. A helical transmembrane segment spans residues 237 to 257 (FLGMAVMMFQQLTGANYYFYY). Topologically, residues 258-271 (GTQVFRGTGMDSPY) are cytoplasmic. The chain crosses the membrane as a helical span at residues 272-292 (LAALIPDAVNCGCTFGAIFVL). The Extracellular portion of the chain corresponds to 293–298 (EFFGRR). The chain crosses the membrane as a helical span at residues 299–319 (SPLIVGGIWQYICFFIYAAVG). Residues 320 to 333 (DRALYHKNGTSNHR) lie on the Cytoplasmic side of the membrane. Residues 334–354 (AGAVMIVFSCLFIFSFSQTWA) form a helical membrane-spanning segment. The Extracellular portion of the chain corresponds to 355-374 (PAAYVIVGESYPVRYRSKCA). A helical membrane pass occupies residues 375 to 395 (AVATSANWFWNFLISFFTPFI). At 396–402 (TNSIGFK) the chain is on the cytoplasmic side. A helical transmembrane segment spans residues 403-423 (YGYIFASCNLTGAAIIFLFVH). The Extracellular segment spans residues 424–518 (ETKGRTLEEI…IRPDKREPRL (95 aa)). A compositionally biased stretch (polar residues) spans 477–506 (IENTDNQGDSGSFQTSTPDDSRPEQNQASA). Residues 477–518 (IENTDNQGDSGSFQTSTPDDSRPEQNQASATYIRPDKREPRL) are disordered.

This sequence belongs to the major facilitator superfamily. Sugar transporter (TC 2.A.1.1) family.

The protein localises to the membrane. This Schizosaccharomyces pombe (strain 972 / ATCC 24843) (Fission yeast) protein is Probable high-affinity hexose transporter ght7 (ght7).